The chain runs to 352 residues: Holliday junction branch migration complex subunit RuvB (352 aa).

The tract at residues 13-201 (FSFRKKELRL…FGISQKIEFY (189 aa)) is large ATPase domain (RuvB-L). ATP-binding positions include R41, G82, K85, T86, T87, 148-150 (EDF), R191, Y201, and R238. Residue T86 participates in Mg(2+) binding. Residues 202–273 (TCDELKQIIV…LIKKALNSYQ (72 aa)) are small ATPAse domain (RuvB-S). Residues 276–352 (EKGLDSLDRH…KYIDSKDDNF (77 aa)) are head domain (RuvB-H). Positions 330 and 335 each coordinate DNA.

Belongs to the RuvB family. Homohexamer. Forms an RuvA(8)-RuvB(12)-Holliday junction (HJ) complex. HJ DNA is sandwiched between 2 RuvA tetramers; dsDNA enters through RuvA and exits via RuvB. An RuvB hexamer assembles on each DNA strand where it exits the tetramer. Each RuvB hexamer is contacted by two RuvA subunits (via domain III) on 2 adjacent RuvB subunits; this complex drives branch migration. In the full resolvosome a probable DNA-RuvA(4)-RuvB(12)-RuvC(2) complex forms which resolves the HJ.

It localises to the cytoplasm. The enzyme catalyses ATP + H2O = ADP + phosphate + H(+). Its function is as follows. The RuvA-RuvB-RuvC complex processes Holliday junction (HJ) DNA during genetic recombination and DNA repair, while the RuvA-RuvB complex plays an important role in the rescue of blocked DNA replication forks via replication fork reversal (RFR). RuvA specifically binds to HJ cruciform DNA, conferring on it an open structure. The RuvB hexamer acts as an ATP-dependent pump, pulling dsDNA into and through the RuvAB complex. RuvB forms 2 homohexamers on either side of HJ DNA bound by 1 or 2 RuvA tetramers; 4 subunits per hexamer contact DNA at a time. Coordinated motions by a converter formed by DNA-disengaged RuvB subunits stimulates ATP hydrolysis and nucleotide exchange. Immobilization of the converter enables RuvB to convert the ATP-contained energy into a lever motion, pulling 2 nucleotides of DNA out of the RuvA tetramer per ATP hydrolyzed, thus driving DNA branch migration. The RuvB motors rotate together with the DNA substrate, which together with the progressing nucleotide cycle form the mechanistic basis for DNA recombination by continuous HJ branch migration. Branch migration allows RuvC to scan DNA until it finds its consensus sequence, where it cleaves and resolves cruciform DNA. The polypeptide is Holliday junction branch migration complex subunit RuvB (Prochlorococcus marinus (strain AS9601)).